Reading from the N-terminus, the 92-residue chain is Small ribosomal subunit protein uS19 (92 aa).

It belongs to the universal ribosomal protein uS19 family.

Functionally, protein S19 forms a complex with S13 that binds strongly to the 16S ribosomal RNA. The sequence is that of Small ribosomal subunit protein uS19 from Limosilactobacillus reuteri (strain DSM 20016) (Lactobacillus reuteri).